Here is a 122-residue protein sequence, read N- to C-terminus: Large ribosomal subunit protein bL12 (122 aa).

This sequence belongs to the bacterial ribosomal protein bL12 family. As to quaternary structure, homodimer. Part of the ribosomal stalk of the 50S ribosomal subunit. Forms a multimeric L10(L12)X complex, where L10 forms an elongated spine to which 2 to 4 L12 dimers bind in a sequential fashion. Binds GTP-bound translation factors.

In terms of biological role, forms part of the ribosomal stalk which helps the ribosome interact with GTP-bound translation factors. Is thus essential for accurate translation. This Deinococcus radiodurans (strain ATCC 13939 / DSM 20539 / JCM 16871 / CCUG 27074 / LMG 4051 / NBRC 15346 / NCIMB 9279 / VKM B-1422 / R1) protein is Large ribosomal subunit protein bL12.